Consider the following 1392-residue polypeptide: DNA-directed RNA polymerase subunit beta'' (1392 aa).

Zn(2+) contacts are provided by Cys224, Cys295, Cys302, and Cys305.

The protein belongs to the RNA polymerase beta' chain family. RpoC2 subfamily. As to quaternary structure, in plastids the minimal PEP RNA polymerase catalytic core is composed of four subunits: alpha, beta, beta', and beta''. When a (nuclear-encoded) sigma factor is associated with the core the holoenzyme is formed, which can initiate transcription. It depends on Zn(2+) as a cofactor.

The protein localises to the plastid. Its subcellular location is the chloroplast. It carries out the reaction RNA(n) + a ribonucleoside 5'-triphosphate = RNA(n+1) + diphosphate. In terms of biological role, DNA-dependent RNA polymerase catalyzes the transcription of DNA into RNA using the four ribonucleoside triphosphates as substrates. The protein is DNA-directed RNA polymerase subunit beta'' of Eucalyptus globulus subsp. globulus (Tasmanian blue gum).